We begin with the raw amino-acid sequence, 103 residues long: Hexon-interlacing protein (103 aa).

Residues 72–99 adopt a coiled-coil conformation; it reads LDELKIQVAAMQNSVTAIQREVNDLKQR.

The protein belongs to the adenoviridae hexon-interlacing protein family. In terms of assembly, homotrimer. Interacts with hexon protein; this interaction tethers the hexons together. Self-interacts with adjacent proteins. Interacts with kinesin light chain KLC1; this interaction leads to capsid disruption at the nuclear pore complex during virus entry into host cell.

It localises to the virion. The protein resides in the host nucleus. Functionally, structural component of the virion that acts as a cement protein on the capsid exterior and forms triskelion structures consisting of three molecules that stabilize three hexon trimers at the center of each icosahedral facet and fixes the peripentonal hexons. Dispensable for assembly. During virus entry, recruits the anterograde motor kinesin-1 to the capsid docked at the nuclear pore complex thereby subjecting the docked capsid to a pulling force. The resulting tension leads to capsid disruption, dispersion of capsid fragments toward cell periphery and eventually viral DNA entry into the host nucleus. In Canis lupus familiaris (Dog), this protein is Hexon-interlacing protein.